The sequence spans 234 residues: Large ribosomal subunit protein uL1 (234 aa).

It belongs to the universal ribosomal protein uL1 family. As to quaternary structure, part of the 50S ribosomal subunit.

Binds directly to 23S rRNA. The L1 stalk is quite mobile in the ribosome, and is involved in E site tRNA release. Its function is as follows. Protein L1 is also a translational repressor protein, it controls the translation of the L11 operon by binding to its mRNA. The protein is Large ribosomal subunit protein uL1 of Prochlorococcus marinus (strain MIT 9211).